The sequence spans 475 residues: Probable proline--tRNA ligase, mitochondrial (475 aa).

The N-terminal 29 residues, 1–29, are a transit peptide targeting the mitochondrion; that stretch reads MEGLLTRCRALPALATCSRQLSGYVPCRF.

It belongs to the class-II aminoacyl-tRNA synthetase family.

It localises to the mitochondrion matrix. The catalysed reaction is tRNA(Pro) + L-proline + ATP = L-prolyl-tRNA(Pro) + AMP + diphosphate. Mitochondrial aminoacyl-tRNA synthetase that catalyzes the specific attachment of the proline amino acid (aa) to the homologous transfer RNA (tRNA), further participating in protein synthesis. The reaction occurs in a two steps: proline is first activated by ATP to form Pro-AMP and then transferred to the acceptor end of tRNA(Pro). The polypeptide is Probable proline--tRNA ligase, mitochondrial (Homo sapiens (Human)).